The sequence spans 79 residues: uncharacterized protein (79 aa).

This is an uncharacterized protein from Listeria innocua serovar 6a (strain ATCC BAA-680 / CLIP 11262).